We begin with the raw amino-acid sequence, 588 residues long: Polyphenol oxidase II, chloroplastic (588 aa).

Polar residues predominate over residues 1 to 10; sequence MASFTTSPCT. Residues 1–32 form a disordered region; sequence MASFTTSPCTSAAPKTPKSLSSSATISSPLPK. The N-terminal 50 residues, 1–50, are a transit peptide targeting the chloroplast; it reads MASFTTSPCTSAAPKTPKSLSSSATISSPLPKPSQIHIATAKRTHHFKVS. Positions 16–29 are enriched in low complexity; sequence TPKSLSSSATISSP. Residues 51 to 88 constitute a thylakoid transit peptide; that stretch reads CNAPNGDSQPKLDRRDVLLGLGGLAGAASLINNPLAFA. 2 cysteine pairs are disulfide-bonded: Cys-99-Cys-116 and Cys-115-Cys-179. 6 residues coordinate Cu cation: His-178, His-199, His-208, His-330, His-334, and His-366. The 2'-(S-cysteinyl)-histidine (Cys-His) cross-link spans 182–199; that stretch reads CNGGYVQTDYPDKEIQVH.

Belongs to the tyrosinase family. As to quaternary structure, monomer. Cu(2+) is required as a cofactor.

The protein resides in the plastid. Its subcellular location is the chloroplast thylakoid lumen. It carries out the reaction 2 catechol + O2 = 2 1,2-benzoquinone + 2 H2O. Its function is as follows. Catalyzes the oxidation of mono- and o-diphenols to o-diquinones. This Ipomoea batatas (Sweet potato) protein is Polyphenol oxidase II, chloroplastic (co-2).